The sequence spans 260 residues: UPF0246 protein Bxeno_A1262 (260 aa).

Belongs to the UPF0246 family.

The polypeptide is UPF0246 protein Bxeno_A1262 (Paraburkholderia xenovorans (strain LB400)).